The primary structure comprises 256 residues: Triosephosphate isomerase (256 aa).

9 to 11 (NWK) provides a ligand contact to substrate. His95 acts as the Electrophile in catalysis. Residue Glu167 is the Proton acceptor of the active site. Substrate is bound by residues Gly173, Ser213, and 234–235 (GG).

Belongs to the triosephosphate isomerase family. In terms of assembly, homodimer.

It localises to the cytoplasm. It carries out the reaction D-glyceraldehyde 3-phosphate = dihydroxyacetone phosphate. It participates in carbohydrate biosynthesis; gluconeogenesis. Its pathway is carbohydrate degradation; glycolysis; D-glyceraldehyde 3-phosphate from glycerone phosphate: step 1/1. Involved in the gluconeogenesis. Catalyzes stereospecifically the conversion of dihydroxyacetone phosphate (DHAP) to D-glyceraldehyde-3-phosphate (G3P). This is Triosephosphate isomerase from Symbiobacterium thermophilum (strain DSM 24528 / JCM 14929 / IAM 14863 / T).